A 949-amino-acid polypeptide reads, in one-letter code: Glycine dehydrogenase (decarboxylating) (949 aa).

Lysine 700 is modified (N6-(pyridoxal phosphate)lysine).

It belongs to the GcvP family. As to quaternary structure, the glycine cleavage system is composed of four proteins: P, T, L and H. Pyridoxal 5'-phosphate is required as a cofactor.

The catalysed reaction is N(6)-[(R)-lipoyl]-L-lysyl-[glycine-cleavage complex H protein] + glycine + H(+) = N(6)-[(R)-S(8)-aminomethyldihydrolipoyl]-L-lysyl-[glycine-cleavage complex H protein] + CO2. In terms of biological role, the glycine cleavage system catalyzes the degradation of glycine. The P protein binds the alpha-amino group of glycine through its pyridoxal phosphate cofactor; CO(2) is released and the remaining methylamine moiety is then transferred to the lipoamide cofactor of the H protein. This chain is Glycine dehydrogenase (decarboxylating), found in Flavobacterium johnsoniae (strain ATCC 17061 / DSM 2064 / JCM 8514 / BCRC 14874 / CCUG 350202 / NBRC 14942 / NCIMB 11054 / UW101) (Cytophaga johnsonae).